A 1372-amino-acid polypeptide reads, in one-letter code: DNA-directed RNA polymerase subunit beta'' (1372 aa).

Zn(2+) contacts are provided by Cys-252, Cys-321, Cys-328, and Cys-331.

This sequence belongs to the RNA polymerase beta' chain family. RpoC2 subfamily. In terms of assembly, in plastids the minimal PEP RNA polymerase catalytic core is composed of four subunits: alpha, beta, beta', and beta''. When a (nuclear-encoded) sigma factor is associated with the core the holoenzyme is formed, which can initiate transcription. The cofactor is Zn(2+).

It is found in the plastid. The protein resides in the organellar chromatophore. It catalyses the reaction RNA(n) + a ribonucleoside 5'-triphosphate = RNA(n+1) + diphosphate. In terms of biological role, DNA-dependent RNA polymerase catalyzes the transcription of DNA into RNA using the four ribonucleoside triphosphates as substrates. The chain is DNA-directed RNA polymerase subunit beta'' from Paulinella chromatophora.